Reading from the N-terminus, the 905-residue chain is Protein translocase subunit SecA (905 aa).

ATP-binding positions include Gln-89, Gly-107 to Thr-111, and Asp-502. Positions 889, 891, 900, and 901 each coordinate Zn(2+).

This sequence belongs to the SecA family. As to quaternary structure, monomer and homodimer. Part of the essential Sec protein translocation apparatus which comprises SecA, SecYEG and auxiliary proteins SecDF-YajC and YidC. Zn(2+) serves as cofactor.

The protein localises to the cell inner membrane. It localises to the cytoplasm. The catalysed reaction is ATP + H2O + cellular proteinSide 1 = ADP + phosphate + cellular proteinSide 2.. Its function is as follows. Part of the Sec protein translocase complex. Interacts with the SecYEG preprotein conducting channel. Has a central role in coupling the hydrolysis of ATP to the transfer of proteins into and across the cell membrane, serving both as a receptor for the preprotein-SecB complex and as an ATP-driven molecular motor driving the stepwise translocation of polypeptide chains across the membrane. This is Protein translocase subunit SecA from Bartonella tribocorum (strain CIP 105476 / IBS 506).